We begin with the raw amino-acid sequence, 225 residues long: Holliday junction branch migration complex subunit RuvA (225 aa).

The domain I stretch occupies residues 1-71 (MISWINGDLV…EDSDLLFGFT (71 aa)). The domain II stretch occupies residues 72 to 150 (SNEQKNFFIE…SEILSEEEKS (79 aa)). Residues 151 to 161 (KGELEIKDPEI) are flexible linker. The domain III stretch occupies residues 161-225 (INKMIEDLQL…LDEDSSNIAR (65 aa)).

It belongs to the RuvA family. Homotetramer. Forms an RuvA(8)-RuvB(12)-Holliday junction (HJ) complex. HJ DNA is sandwiched between 2 RuvA tetramers; dsDNA enters through RuvA and exits via RuvB. An RuvB hexamer assembles on each DNA strand where it exits the tetramer. Each RuvB hexamer is contacted by two RuvA subunits (via domain III) on 2 adjacent RuvB subunits; this complex drives branch migration. In the full resolvosome a probable DNA-RuvA(4)-RuvB(12)-RuvC(2) complex forms which resolves the HJ.

The protein resides in the cytoplasm. Its function is as follows. The RuvA-RuvB-RuvC complex processes Holliday junction (HJ) DNA during genetic recombination and DNA repair, while the RuvA-RuvB complex plays an important role in the rescue of blocked DNA replication forks via replication fork reversal (RFR). RuvA specifically binds to HJ cruciform DNA, conferring on it an open structure. The RuvB hexamer acts as an ATP-dependent pump, pulling dsDNA into and through the RuvAB complex. HJ branch migration allows RuvC to scan DNA until it finds its consensus sequence, where it cleaves and resolves the cruciform DNA. The polypeptide is Holliday junction branch migration complex subunit RuvA (Prochlorococcus marinus (strain MIT 9301)).